The primary structure comprises 238 residues: Probable transcriptional regulatory protein SSP2054 (238 aa).

It belongs to the TACO1 family. YeeN subfamily.

Its subcellular location is the cytoplasm. In Staphylococcus saprophyticus subsp. saprophyticus (strain ATCC 15305 / DSM 20229 / NCIMB 8711 / NCTC 7292 / S-41), this protein is Probable transcriptional regulatory protein SSP2054.